The primary structure comprises 156 residues: MPRRKVVAKREILPDPKFGSERLAKFMNHLMVSGKKSVAERIVYGALDKVAERSKDEPLEIFDKALETIQPMVEVKSRRVGGATYQVPVEVRPSRRQALAMRWLVDAARSRGEKTMVQRLAGEMLDAAEGKGAAVKKREDVHRMADANKAFSHYRF.

It belongs to the universal ribosomal protein uS7 family. As to quaternary structure, part of the 30S ribosomal subunit. Contacts proteins S9 and S11.

Its function is as follows. One of the primary rRNA binding proteins, it binds directly to 16S rRNA where it nucleates assembly of the head domain of the 30S subunit. Is located at the subunit interface close to the decoding center, probably blocks exit of the E-site tRNA. The protein is Small ribosomal subunit protein uS7 of Chromohalobacter salexigens (strain ATCC BAA-138 / DSM 3043 / CIP 106854 / NCIMB 13768 / 1H11).